The chain runs to 201 residues: dTTP/UTP pyrophosphatase (201 aa).

Catalysis depends on Asp-79, which acts as the Proton acceptor.

Belongs to the Maf family. YhdE subfamily. It depends on a divalent metal cation as a cofactor.

The protein resides in the cytoplasm. The catalysed reaction is dTTP + H2O = dTMP + diphosphate + H(+). It catalyses the reaction UTP + H2O = UMP + diphosphate + H(+). Nucleoside triphosphate pyrophosphatase that hydrolyzes dTTP and UTP. May have a dual role in cell division arrest and in preventing the incorporation of modified nucleotides into cellular nucleic acids. In Hahella chejuensis (strain KCTC 2396), this protein is dTTP/UTP pyrophosphatase.